Reading from the N-terminus, the 240-residue chain is uncharacterized protein (240 aa).

Asp-66 functions as the Proton acceptor in the catalytic mechanism. Asp-129 is an active-site residue. The active-site Proton acceptor is the His-131.

It belongs to the glucosamine/galactosamine-6-phosphate isomerase family.

This is an uncharacterized protein from Escherichia coli (strain K12).